Consider the following 444-residue polypeptide: tRNA-2-methylthio-N(6)-dimethylallyladenosine synthase (444 aa).

Residues 3–117 (RGLYIESYGC…LPELIMKVKR (115 aa)) form the MTTase N-terminal domain. [4Fe-4S] cluster is bound by residues C12, C48, C80, C155, C159, and C162. Residues 141-374 (ANGGVSAYVS…LLTKQQLQFN (234 aa)) form the Radical SAM core domain. The TRAM domain maps to 375–441 (KSMEGRVMDV…QNSLEGTVLS (67 aa)).

Belongs to the methylthiotransferase family. MiaB subfamily. Monomer. The cofactor is [4Fe-4S] cluster.

The protein localises to the cytoplasm. It carries out the reaction N(6)-dimethylallyladenosine(37) in tRNA + (sulfur carrier)-SH + AH2 + 2 S-adenosyl-L-methionine = 2-methylsulfanyl-N(6)-dimethylallyladenosine(37) in tRNA + (sulfur carrier)-H + 5'-deoxyadenosine + L-methionine + A + S-adenosyl-L-homocysteine + 2 H(+). Its function is as follows. Catalyzes the methylthiolation of N6-(dimethylallyl)adenosine (i(6)A), leading to the formation of 2-methylthio-N6-(dimethylallyl)adenosine (ms(2)i(6)A) at position 37 in tRNAs that read codons beginning with uridine. This is tRNA-2-methylthio-N(6)-dimethylallyladenosine synthase from Anaplasma phagocytophilum (strain HZ).